The primary structure comprises 1093 residues: Protein AF-17 (1093 aa).

The PHD-type 1 zinc-finger motif lies at 5–57 (VGGCCVCSDERGWAENPLVYCDGHACSVAVHQACYGIVQVPTGPWFCRKCESQ). The C2HC pre-PHD-type zinc-finger motif lies at 62-95 (RVRCELCPHKDGALKRTDNGGWAHVVCALYIPEV). A PHD-type 2 zinc finger spans residues 118–181 (KTCYICEEQG…KYCGYCKYHF (64 aa)). The tract at residues 185 to 500 (KTSRHSSGGG…GGPAAPSLPS (316 aa)) is disordered. Positions 191–212 (SGGGGGGAGGGGGSMGGGGSGF) are enriched in gly residues. The span at 231 to 255 (PTHHERGQKKSRKDKERLKQKHKKR) shows a compositional bias: basic residues. Ser-258 is modified (phosphoserine). The span at 258–268 (SPPSILTPPVV) shows a compositional bias: pro residues. Over residues 282–300 (SHHEASTQETSESSRESKG) the composition is skewed to basic and acidic residues. The span at 301 to 316 (KKSSSHSLSHKGKKLS) shows a compositional bias: basic residues. The span at 317–340 (SGKGVSSFTSASSSSSSSSSSSGG) shows a compositional bias: low complexity. Residues 345 to 354 (AVSSLQSSPD) are compositionally biased toward polar residues. Residues 374 to 388 (APAPSAPPSPSAPEP) show a composition bias toward pro residues. Phosphoserine occurs at positions 378 and 423. Low complexity predominate over residues 410-425 (STTTSSSGRARAPSPG). Thr-451 bears the Phosphothreonine mark. Over residues 465 to 484 (EKKHKASKRSRHGPGRPKGS) the composition is skewed to basic residues. The tract at residues 729–764 (LQKENQRLQEQILSLTAKKERLQILNVQLSVPFPAL) is leucine-zipper. Disordered regions lie at residues 775-871 (VPGP…RAPG) and 1060-1093 (QTNPFLSLSGAEGSGGGPKGGTADKGASANQEKG). Residues 787 to 796 (SSDSLSTSKS) show a composition bias toward low complexity. Positions 804 to 813 (GLDNSLSTSS) are enriched in polar residues. Composition is skewed to low complexity over residues 818-832 (SGCPSRSSSSLSFHS) and 839-853 (LLQQSPATLPLALPG).

Interacts with histone H3; interaction is necessary for MLLT6 binding to nucleosomes; interaction is inhibited by histone H3 'Lys-27' methylations (H3K27me1, H3K27me2 and H3K27me3).

It localises to the nucleus. The protein is Protein AF-17 (MLLT6) of Homo sapiens (Human).